We begin with the raw amino-acid sequence, 102 residues long: Small ribosomal subunit protein uS10 (102 aa).

Belongs to the universal ribosomal protein uS10 family. Part of the 30S ribosomal subunit.

In terms of biological role, involved in the binding of tRNA to the ribosomes. The sequence is that of Small ribosomal subunit protein uS10 from Kosmotoga olearia (strain ATCC BAA-1733 / DSM 21960 / TBF 19.5.1).